The chain runs to 130 residues: MEEEEIRTWSFPEEVWQVATQPDSQQQHEDQHLSHTFLDKKDWTGNELHECNELGKKLHQNPNLLPSKQQVRTRDLCRKSLMCNLDFTPNAYLARRRFQCDGHGNFFSVRNLKLHLQERIHAEVTSVEVL.

The protein is Putative protein ZNF815 (ZNF815P) of Homo sapiens (Human).